Reading from the N-terminus, the 994-residue chain is Chloride channel protein E (994 aa).

Residues 1–33 are disordered; it reads MTRKENEESESLSSSSSPIDNSNNNNNNNNHSI. The Cytoplasmic portion of the chain corresponds to 1-163; that stretch reads MTRKENEESE…HWLGKERIST (163 aa). The span at 11 to 32 shows a compositional bias: low complexity; that stretch reads SLSSSSSPIDNSNNNNNNNNHS. Helical transmembrane passes span 164-184, 227-247, 271-291, 300-320, 334-354, 362-382, 410-430, 449-469, 505-525, 527-547, and 554-574; these read LLFI…CDFL, IVFV…ISFI, VLGF…SAAG, FMHA…FGAI, ALTS…LFAI, VMGN…IFFL, LITF…FVFI, IILV…AGPL, LLVF…LPIP, GAIT…GEIL, and QAIE…SGTI. The 62-residue stretch at 644–705 folds into the CBS 1 domain; that stretch reads MKKNINYLSM…LDIHIENIEQ (62 aa). Disordered stretches follow at residues 715-767, 802-822, and 846-872; these read FVNN…NSEN, IKPN…SDFE, and DENS…GDGI. Composition is skewed to low complexity over residues 717 to 764 and 809 to 822; these read NNNN…NSNN and SSSN…SDFE. Residues 859–870 show a composition bias toward acidic residues; the sequence is HDDEDDDEEEGD. The 51-residue stretch at 944 to 994 folds into the CBS 2 domain; it reads MDLAPSQVPDLTPLNKVFHLFTMLGLGFTYVTSLGKLVGVITKNSLMEQDL.

Belongs to the chloride channel (TC 2.A.49) family.

It is found in the membrane. Voltage-gated chloride channel. Chloride channels may have several functions including the regulation of cell volume, membrane potential stabilization and signal transduction. This Dictyostelium discoideum (Social amoeba) protein is Chloride channel protein E (clcE).